The chain runs to 203 residues: Large ribosomal subunit protein bL25 (203 aa).

Belongs to the bacterial ribosomal protein bL25 family. CTC subfamily. Part of the 50S ribosomal subunit; part of the 5S rRNA/L5/L18/L25 subcomplex. Contacts the 5S rRNA. Binds to the 5S rRNA independently of L5 and L18.

In terms of biological role, this is one of the proteins that binds to the 5S RNA in the ribosome where it forms part of the central protuberance. The chain is Large ribosomal subunit protein bL25 from Pseudomonas syringae pv. tomato (strain ATCC BAA-871 / DC3000).